The sequence spans 1516 residues: Myosin-14 (1516 aa).

The Myosin N-terminal SH3-like domain maps to 7 to 56; sequence NVGSCVWVEDPEVAWIDGEVIEVKGSDIKVKCTSGKTVAIKVSSAYPKDV. The Myosin motor domain occupies 61–738; that stretch reads SGVDDMTRLA…QMADLDARRN (678 aa). ATP is bound by residues 155-162 and 208-216; these read GESGAGKT and NNNSSRFGK. Actin-binding stretches follow at residues 494–528, 530–553, 588–612, and 612–634; these read LIEK…YQTF, DHKH…AGDV, FPLL…KQQL, and LVTL…KPNN. IQ domains lie at 741-770, 764-793, 789-818, 812-841, 837-866, and 860-889; these read LGRA…VATN, LRKV…DAAV, RDAA…AAVS, LYFA…DKAA, QDKA…AAIT, and LKKA…AAKE. Residues 890-1056 are a coiled coil; the sequence is TGVLEAAKSK…ENKILRQKSL (167 aa). Positions 1061 to 1085 are disordered; the sequence is GHLPPTPVKGSQNGHFSSKESPFNG. A compositionally biased stretch (polar residues) spans 1069-1084; sequence KGSQNGHFSSKESPFN. The Dilute domain maps to 1158–1463; sequence DRLVQMIGSA…IANMRVLMTE (306 aa).

This sequence belongs to the TRAFAC class myosin-kinesin ATPase superfamily. Myosin family. Plant myosin class XI subfamily. In terms of assembly, homodimer.

Its function is as follows. Myosin heavy chain that is required for the cell cycle-regulated transport of various organelles and proteins for their segregation. Functions by binding with its tail domain to receptor proteins on organelles and exerting force with its N-terminal motor domain against actin filaments, thereby transporting its cargo along polarized actin cables. This chain is Myosin-14 (XI-H), found in Arabidopsis thaliana (Mouse-ear cress).